The primary structure comprises 330 residues: Ketol-acid reductoisomerase (NADP(+)) (330 aa).

One can recognise a KARI N-terminal Rossmann domain in the interval 2–182 (ARMYYDADAN…GGTRAGILET (181 aa)). NADP(+) contacts are provided by residues 25 to 28 (YGSQ), S51, S53, and 83 to 86 (DEFQ). Residue H108 is part of the active site. NADP(+) is bound at residue G134. Residues 183 to 328 (SFREETETDL…KDLRAMFSWL (146 aa)) form the KARI C-terminal knotted domain. Positions 191, 195, 227, and 231 each coordinate Mg(2+). S252 lines the substrate pocket.

Belongs to the ketol-acid reductoisomerase family. The cofactor is Mg(2+).

The enzyme catalyses (2R)-2,3-dihydroxy-3-methylbutanoate + NADP(+) = (2S)-2-acetolactate + NADPH + H(+). It carries out the reaction (2R,3R)-2,3-dihydroxy-3-methylpentanoate + NADP(+) = (S)-2-ethyl-2-hydroxy-3-oxobutanoate + NADPH + H(+). It participates in amino-acid biosynthesis; L-isoleucine biosynthesis; L-isoleucine from 2-oxobutanoate: step 2/4. The protein operates within amino-acid biosynthesis; L-valine biosynthesis; L-valine from pyruvate: step 2/4. In terms of biological role, involved in the biosynthesis of branched-chain amino acids (BCAA). Catalyzes an alkyl-migration followed by a ketol-acid reduction of (S)-2-acetolactate (S2AL) to yield (R)-2,3-dihydroxy-isovalerate. In the isomerase reaction, S2AL is rearranged via a Mg-dependent methyl migration to produce 3-hydroxy-3-methyl-2-ketobutyrate (HMKB). In the reductase reaction, this 2-ketoacid undergoes a metal-dependent reduction by NADPH to yield (R)-2,3-dihydroxy-isovalerate. This Synechococcus sp. (strain ATCC 27144 / PCC 6301 / SAUG 1402/1) (Anacystis nidulans) protein is Ketol-acid reductoisomerase (NADP(+)).